A 372-amino-acid chain; its full sequence is Isoliquiritigenin 2'-O-methyltransferase (372 aa).

S-adenosyl-L-methionine-binding residues include glycine 217, aspartate 240, aspartate 260, methionine 261, and lysine 274. The active-site Proton acceptor is histidine 278.

The protein belongs to the class I-like SAM-binding methyltransferase superfamily. Cation-independent O-methyltransferase family. COMT subfamily. Monomer. Homodimer. In terms of tissue distribution, roots (at protein level). Expressed mainly in roots, and to a lesser extent in root nodules. In the roots, expression is not detected in the root tip or the cells immediately behind the tip, but is detected in tissues starting 1.5-2.0 mm distal to the root tip. Detected in the epidermal and cortical cells of 2 day old roots, with lower levels in vascular tissue.

The catalysed reaction is isoliquiritigenin + S-adenosyl-L-methionine = 2'-O-methylisoliquiritigenin + S-adenosyl-L-homocysteine + H(+). It catalyses the reaction licodione + S-adenosyl-L-methionine = 2'-O-methyllicodione + S-adenosyl-L-homocysteine + H(+). Inhibited by 1 mM Co(2+), Cu(2+), Zn(2+) or Fe(2+). Non-competitively inhibited by S-adenosyl-L-homocysteine. Competitively inhibited by 2'-O-methylisoliquiritigenin. In terms of biological role, methylates the 2'-hydroxyl of isoliquiritigenin and licodione. Does not methylate narigenin chalcone, caffeic acid or daidzein. Involved in the root nodulation initiation by promoting the biosynthesis of nod-inducing molecules. The chain is Isoliquiritigenin 2'-O-methyltransferase from Medicago sativa (Alfalfa).